Reading from the N-terminus, the 148-residue chain is Large ribosomal subunit protein bL9 (148 aa).

It belongs to the bacterial ribosomal protein bL9 family.

Functionally, binds to the 23S rRNA. The polypeptide is Large ribosomal subunit protein bL9 (Desulfatibacillum aliphaticivorans).